Here is a 577-residue protein sequence, read N- to C-terminus: (E)-beta-farnesene synthase (577 aa).

5 residues coordinate Mg(2+): Asp327, Asp331, Asp474, Ser478, and Glu482. The short motif at 327–331 (DDTFD) is the DDXXD motif element.

This sequence belongs to the terpene synthase family. Requires Mg(2+) as cofactor. The cofactor is Co(2+). Mn(2+) serves as cofactor. As to expression, expressed in flowers.

It is found in the cytoplasm. The catalysed reaction is (2E,6E)-farnesyl diphosphate = (E)-beta-farnesene + diphosphate. Its pathway is secondary metabolite biosynthesis; terpenoid biosynthesis. Strongly inhibited by manganese at concentration higher than 20 uM. Its function is as follows. Sesquiterpene cyclase catalyzing the production of beta-farnesene from farnesyl diphosphate. Unable to use geranyl diphosphate as substrate. The chain is (E)-beta-farnesene synthase (CASC125) from Artemisia annua (Sweet wormwood).